We begin with the raw amino-acid sequence, 238 residues long: Purine nucleoside phosphorylase DeoD-type (238 aa).

His-4 is a binding site for a purine D-ribonucleoside. Phosphate contacts are provided by residues Gly-20, Arg-24, Arg-43, and 87–90 (RVGS). A purine D-ribonucleoside is bound by residues 179–181 (EME) and 203–204 (SD). Residue Asp-204 is the Proton donor of the active site.

This sequence belongs to the PNP/UDP phosphorylase family. As to quaternary structure, homohexamer; trimer of homodimers.

The catalysed reaction is a purine D-ribonucleoside + phosphate = a purine nucleobase + alpha-D-ribose 1-phosphate. It carries out the reaction a purine 2'-deoxy-D-ribonucleoside + phosphate = a purine nucleobase + 2-deoxy-alpha-D-ribose 1-phosphate. Its function is as follows. Catalyzes the reversible phosphorolytic breakdown of the N-glycosidic bond in the beta-(deoxy)ribonucleoside molecules, with the formation of the corresponding free purine bases and pentose-1-phosphate. In Histophilus somni (strain 129Pt) (Haemophilus somnus), this protein is Purine nucleoside phosphorylase DeoD-type.